The following is a 552-amino-acid chain: Urocanate hydratase (552 aa).

Residues 49-50 (GG), glutamine 127, 173-175 (GMG), aspartate 193, 239-240 (NA), 260-264 (QTSAH), 270-271 (YI), and tyrosine 319 each bind NAD(+). Cysteine 407 is an active-site residue. Glycine 489 is a binding site for NAD(+).

Belongs to the urocanase family. The cofactor is NAD(+).

It localises to the cytoplasm. It carries out the reaction 4-imidazolone-5-propanoate = trans-urocanate + H2O. The protein operates within amino-acid degradation; L-histidine degradation into L-glutamate; N-formimidoyl-L-glutamate from L-histidine: step 2/3. In terms of biological role, catalyzes the conversion of urocanate to 4-imidazolone-5-propionate. This is Urocanate hydratase from Bacillus cereus (strain AH820).